The following is a 229-amino-acid chain: 7-cyano-7-deazaguanine synthase (229 aa).

8 to 18 (CSGGLDSSVIA) lines the ATP pocket. Positions 190, 203, 206, and 209 each coordinate Zn(2+).

This sequence belongs to the QueC family. The cofactor is Zn(2+).

The catalysed reaction is 7-carboxy-7-deazaguanine + NH4(+) + ATP = 7-cyano-7-deazaguanine + ADP + phosphate + H2O + H(+). It functions in the pathway purine metabolism; 7-cyano-7-deazaguanine biosynthesis. Catalyzes the ATP-dependent conversion of 7-carboxy-7-deazaguanine (CDG) to 7-cyano-7-deazaguanine (preQ(0)). This is 7-cyano-7-deazaguanine synthase from Methanopyrus kandleri (strain AV19 / DSM 6324 / JCM 9639 / NBRC 100938).